The primary structure comprises 661 residues: Threonine--tRNA ligase (661 aa).

The TGS domain occupies 1–64; the sequence is MSQAISLTFP…TTGRIEIITR (64 aa). The segment at 245-546 is catalytic; it reads DHRRLGREMD…LIENFAGHMP (302 aa). C341, H392, and H523 together coordinate Zn(2+).

It belongs to the class-II aminoacyl-tRNA synthetase family. As to quaternary structure, homodimer. It depends on Zn(2+) as a cofactor.

Its subcellular location is the cytoplasm. It catalyses the reaction tRNA(Thr) + L-threonine + ATP = L-threonyl-tRNA(Thr) + AMP + diphosphate + H(+). In terms of biological role, catalyzes the attachment of threonine to tRNA(Thr) in a two-step reaction: L-threonine is first activated by ATP to form Thr-AMP and then transferred to the acceptor end of tRNA(Thr). Also edits incorrectly charged L-seryl-tRNA(Thr). This is Threonine--tRNA ligase from Rhizobium johnstonii (strain DSM 114642 / LMG 32736 / 3841) (Rhizobium leguminosarum bv. viciae).